The primary structure comprises 85 residues: Cell division protein ZapA (85 aa).

Residues 60 to 85 (AVNVVHDYLKLKEQYEKLEIQLKEKE) adopt a coiled-coil conformation.

It belongs to the ZapA family. Type 2 subfamily. As to quaternary structure, homodimer. Interacts with FtsZ.

It localises to the cytoplasm. Functionally, activator of cell division through the inhibition of FtsZ GTPase activity, therefore promoting FtsZ assembly into bundles of protofilaments necessary for the formation of the division Z ring. It is recruited early at mid-cell but it is not essential for cell division. This Bacillus pumilus (strain SAFR-032) protein is Cell division protein ZapA.